Reading from the N-terminus, the 314-residue chain is Putative S-adenosyl-L-methionine-dependent methyltransferase MAV_4441 (314 aa).

S-adenosyl-L-methionine is bound by residues Asp138 and 167–168; that span reads DL.

It belongs to the UPF0677 family.

Functionally, exhibits S-adenosyl-L-methionine-dependent methyltransferase activity. This chain is Putative S-adenosyl-L-methionine-dependent methyltransferase MAV_4441, found in Mycobacterium avium (strain 104).